The chain runs to 225 residues: NAD(P)H-quinone oxidoreductase subunit K, chloroplastic (225 aa).

[4Fe-4S] cluster is bound by residues C43, C44, C108, and C139.

The protein belongs to the complex I 20 kDa subunit family. As to quaternary structure, NDH is composed of at least 16 different subunits, 5 of which are encoded in the nucleus. [4Fe-4S] cluster serves as cofactor.

It localises to the plastid. Its subcellular location is the chloroplast thylakoid membrane. The catalysed reaction is a plastoquinone + NADH + (n+1) H(+)(in) = a plastoquinol + NAD(+) + n H(+)(out). It carries out the reaction a plastoquinone + NADPH + (n+1) H(+)(in) = a plastoquinol + NADP(+) + n H(+)(out). In terms of biological role, NDH shuttles electrons from NAD(P)H:plastoquinone, via FMN and iron-sulfur (Fe-S) centers, to quinones in the photosynthetic chain and possibly in a chloroplast respiratory chain. The immediate electron acceptor for the enzyme in this species is believed to be plastoquinone. Couples the redox reaction to proton translocation, and thus conserves the redox energy in a proton gradient. The chain is NAD(P)H-quinone oxidoreductase subunit K, chloroplastic from Lobularia maritima (Sweet alyssum).